The primary structure comprises 533 residues: Glucose-6-phosphate exchanger SLC37A1 (533 aa).

The helical transmembrane segment at 18–38 threads the bilayer; it reads QWYRAFIFILTFLLYASFHLS. N-linked (GlcNAc...) asparagine glycosylation is present at Asn-81. 4 consecutive transmembrane segments (helical) span residues 100–120, 129–149, 157–177, and 222–242; these read GALD…SGII, YLTF…LGYF, FYVV…PSVV, and SFVV…LFLI. N-linked (GlcNAc...) asparagine glycosylation occurs at Asn-263. 7 helical membrane passes run 304–324, 334–354, 366–386, 394–414, 423–443, 466–486, and 490–510; these read VVIL…TGAL, LCLL…PLYI, GELS…AGVI, ASTC…FSTV, IAML…ITTA, AIID…AGLL, and GWSN…LFLI.

The protein belongs to the major facilitator superfamily. Organophosphate:Pi antiporter (OPA) (TC 2.A.1.4) family. In terms of tissue distribution, expressed in numerous tissues, with highest expression in pancreas, kidney, bone marrow, spleen, liver, small intestine, as well as in fetal brain, liver and spleen.

It is found in the endoplasmic reticulum membrane. It carries out the reaction D-glucose 6-phosphate(in) + phosphate(out) = D-glucose 6-phosphate(out) + phosphate(in). With respect to regulation, inhibited by vanadate but not by chlorogenic acid. Its function is as follows. Inorganic phosphate and glucose-6-phosphate antiporter. May transport cytoplasmic glucose-6-phosphate into the lumen of the endoplasmic reticulum and translocate inorganic phosphate into the opposite direction. Independent of a lumenal glucose-6-phosphatase. May not play a role in homeostatic regulation of blood glucose levels. This chain is Glucose-6-phosphate exchanger SLC37A1, found in Homo sapiens (Human).